The following is a 281-amino-acid chain: MIETLLPASALAFPAIDPVIFRIGPLAVHWYGLGYVVGILFAWWYGKKLLRSHRLWANNQPPMAPEALDDFVIWAALGVVLGGRIGYVLFYNFSYYISNPLAIPALWDGGMSFHGGILGTTLAMILFARSRGILVWSMFDTIAAGVPIGLGVVRVANFINSELWGRVSDVPWAVYFPNGGPLPRHPSQLYEAFLEGLVLFFVLFVLVWGARKLKQPGFVAGAFVTGYGLSRIAVEFFREPDAQIGYLFGGWLTMGMVLSVPMVLLGLWAMWRANRAAARNA.

4 helical membrane-spanning segments follow: residues 23 to 43 (IGPL…LFAW), 71 to 91 (FVIW…VLFY), 107 to 127 (WDGG…MILF), and 133 to 153 (ILVW…LGVV). Arginine 154 contributes to the a 1,2-diacyl-sn-glycero-3-phospho-(1'-sn-glycerol) binding site. A run of 3 helical transmembrane segments spans residues 189–209 (LYEA…LVWG), 217–237 (GFVA…VEFF), and 247–267 (LFGG…LLGL).

It belongs to the Lgt family.

The protein resides in the cell inner membrane. It catalyses the reaction L-cysteinyl-[prolipoprotein] + a 1,2-diacyl-sn-glycero-3-phospho-(1'-sn-glycerol) = an S-1,2-diacyl-sn-glyceryl-L-cysteinyl-[prolipoprotein] + sn-glycerol 1-phosphate + H(+). It functions in the pathway protein modification; lipoprotein biosynthesis (diacylglyceryl transfer). Functionally, catalyzes the transfer of the diacylglyceryl group from phosphatidylglycerol to the sulfhydryl group of the N-terminal cysteine of a prolipoprotein, the first step in the formation of mature lipoproteins. The polypeptide is Phosphatidylglycerol--prolipoprotein diacylglyceryl transferase (Brucella canis (strain ATCC 23365 / NCTC 10854 / RM-666)).